Consider the following 326-residue polypeptide: H-2 class I histocompatibility antigen, Q8 alpha chain (326 aa).

The N-terminal stretch at 1-21 (MALTMLLLLVAAALTLIETRA) is a signal peptide. The segment at 22-111 (GPHSLRYFHT…AQRYYNQSKG (90 aa)) is alpha-1. Residues 22-305 (GPHSLRYFHT…EPPPSTVSNM (284 aa)) lie on the Extracellular side of the membrane. Residue Asn107 is glycosylated (N-linked (GlcNAc...) asparagine). Residues 112-203 (GSHTLQWMYG…QLRKETLLCT (92 aa)) form an alpha-2 region. 2 cysteine pairs are disulfide-bonded: Cys122/Cys185 and Cys224/Cys280. Residues 204 to 295 (DPPKAHVTHH…GLPEPLTLRW (92 aa)) are alpha-3. The Ig-like C1-type domain maps to 206-294 (PKAHVTHHPR…EGLPEPLTLR (89 aa)). Asn277 carries an N-linked (GlcNAc...) asparagine glycan. The tract at residues 296–305 (EPPPSTVSNM) is connecting peptide. Residues 306-326 (ANVAILVVLVAWPSLELWWIL) form a helical membrane-spanning segment.

Belongs to the MHC class I family. As to quaternary structure, heterodimer of an alpha chain and a beta chain (beta-2-microglobulin).

It is found in the membrane. Involved in the presentation of foreign antigens to the immune system. In Mus musculus (Mouse), this protein is H-2 class I histocompatibility antigen, Q8 alpha chain (H2-Q8).